The sequence spans 444 residues: L-seryl-tRNA(Sec) selenium transferase (444 aa).

Lys-284 is subject to N6-(pyridoxal phosphate)lysine.

It belongs to the SelA family. Pyridoxal 5'-phosphate is required as a cofactor.

Its subcellular location is the cytoplasm. It carries out the reaction L-seryl-tRNA(Sec) + selenophosphate + H(+) = L-selenocysteinyl-tRNA(Sec) + phosphate. It functions in the pathway aminoacyl-tRNA biosynthesis; selenocysteinyl-tRNA(Sec) biosynthesis; selenocysteinyl-tRNA(Sec) from L-seryl-tRNA(Sec) (bacterial route): step 1/1. In terms of biological role, converts seryl-tRNA(Sec) to selenocysteinyl-tRNA(Sec) required for selenoprotein biosynthesis. The chain is L-seryl-tRNA(Sec) selenium transferase from Wolinella succinogenes (strain ATCC 29543 / DSM 1740 / CCUG 13145 / JCM 31913 / LMG 7466 / NCTC 11488 / FDC 602W) (Vibrio succinogenes).